A 313-amino-acid chain; its full sequence is Porphobilinogen deaminase (313 aa).

The residue at position 241 (cysteine 241) is an S-(dipyrrolylmethanemethyl)cysteine.

It belongs to the HMBS family. Monomer. The cofactor is dipyrromethane.

It catalyses the reaction 4 porphobilinogen + H2O = hydroxymethylbilane + 4 NH4(+). It functions in the pathway porphyrin-containing compound metabolism; protoporphyrin-IX biosynthesis; coproporphyrinogen-III from 5-aminolevulinate: step 2/4. Its pathway is porphyrin-containing compound metabolism; chlorophyll biosynthesis. In terms of biological role, tetrapolymerization of the monopyrrole PBG into the hydroxymethylbilane pre-uroporphyrinogen in several discrete steps. This chain is Porphobilinogen deaminase, found in Chlorobium phaeobacteroides (strain BS1).